A 190-amino-acid chain; its full sequence is 7-methyl-GTP pyrophosphatase (190 aa).

Asp69 acts as the Proton acceptor in catalysis.

This sequence belongs to the Maf family. YceF subfamily. The cofactor is a divalent metal cation.

Its subcellular location is the cytoplasm. The enzyme catalyses N(7)-methyl-GTP + H2O = N(7)-methyl-GMP + diphosphate + H(+). Nucleoside triphosphate pyrophosphatase that hydrolyzes 7-methyl-GTP (m(7)GTP). May have a dual role in cell division arrest and in preventing the incorporation of modified nucleotides into cellular nucleic acids. This Xanthomonas axonopodis pv. citri (strain 306) protein is 7-methyl-GTP pyrophosphatase.